The following is a 405-amino-acid chain: Divinyl chlorophyllide a 8-vinyl-reductase, chloroplastic (405 aa).

Residues 1–58 (MAALLLSSHLTAASSSSTTSPTARPAPSFVSFRAANAAPKGARRGWPFLASSVEPPPA) constitute a chloroplast transit peptide.

The protein localises to the plastid. Its subcellular location is the chloroplast. The catalysed reaction is protochlorophyllide a + NADP(+) = 3,8-divinyl protochlorophyllide a + NADPH + H(+). The protein operates within porphyrin-containing compound metabolism; chlorophyll biosynthesis. Functionally, catalyzes the conversion of divinyl chlorophyllide to monovinyl chlorophyllide. Reduces the 8-vinyl group of the tetrapyrrole to an ethyl group using NADPH as the reductant. Can use (3,8-divinyl)-chlorophyllide a (DV-Chlidea) &gt; (3,8-divinyl)-chlorophyll a (DV-Chla) &gt; (3,8-divinyl)-protochlorophyllide a (DV-Pchlidea) &gt; (3,8-divinyl)-magnesium-protoporphyrin IX monomethyl ester (DV-MPE) &gt; (3,8-divinyl)-magnesium-protoporphyrin IX (DV-Mg-Proto) as substrates. This chain is Divinyl chlorophyllide a 8-vinyl-reductase, chloroplastic (DVR), found in Oryza sativa subsp. indica (Rice).